The primary structure comprises 10746 residues: Extracellular matrix-binding protein ebh (10746 aa).

Positions 1-39 (MNYRDKIQKFSIRKYTVGTFSTVIATLVFLGLNTSQAQA) are cleaved as a signal peptide. Composition is skewed to polar residues over residues 41-59 (ETNQ…GDTQ) and 67-113 (VQNS…SQNE). Disordered regions lie at residues 41–174 (ETNQ…GNVQ), 246–274 (MPQR…PRSV), and 1340–1372 (IAGN…DGQR). Over residues 120 to 130 (AAATPTQSAKA) the composition is skewed to low complexity. The segment covering 132–158 (SKHEQSESRAANKKENDNKATHVESHE) has biased composition (basic and acidic residues). Over residues 162-173 (VTASDSSDSGNV) the composition is skewed to polar residues. Over residues 248-263 (QRQQTSRRSSRIQTRS) the composition is skewed to low complexity. A compositionally biased stretch (polar residues) spans 1356–1372 (YKTTGYSQSNPTSDGQR). FIVAR domains are found at residues 2520-2576 (AKNH…VNAA), 2606-2662 (SKNN…ISDE), 2683-2746 (DTHE…VQTA), 2776-2832 (AKTK…IAAK), 2860-2915 (AKTQ…IRQN), 2943-2998 (AKNQ…INTN), 3026-3081 (AKTQ…INDK), 3150-3208 (AMTK…VNQK), 3276-3335 (AMTG…VNNA), 3403-3461 (AMGN…VNSA), 3529-3587 (AMGN…VTEA), 3655-3713 (AMNT…ITQK), 3781-3839 (AMAS…VEAA), 3907-3965 (AMGN…VEQA), 4033-4091 (AMGQ…VTAA), 4159-4217 (AMKG…ITQA), 4285-4343 (QMGN…VEAA), 4411-4469 (AMAN…VENA), 4537-4595 (AMGT…INQI), 4663-4721 (AMGQ…VDRA), 4789-4847 (AMNS…VDNA), 4915-4973 (AMGA…INGM), 5041-5099 (AMTV…VNSA), 5167-5225 (AMKG…ITQA), 5293-5351 (AMHS…VEQA), 5419-5477 (AMGQ…VERA), 5545-5603 (AMTA…VTNA), 5671-5729 (AMKG…INQA), 5797-5855 (AMTN…VESA), 5923-5981 (AMSN…VEQA), 6049-6107 (AMNQ…INQK), 6175-6232 (AMGN…VQAA), 6300-6358 (AMGQ…VEAA), 6426-6484 (AMQR…VEQA), 6552-6610 (AMDQ…VTAA), 6678-6736 (AMNQ…VTQA), 6804-6862 (AMER…VEAA), 6930-6988 (AMGN…VEAA), 7056-7114 (AMDK…INQA), 7182-7240 (AMGN…VEQA), 7308-7366 (AMTQ…ITAA), 7434-7492 (AMTQ…IQQA), 7560-7618 (AMTN…VEQA), 7686-7744 (AMTQ…VAQA), 7812-7870 (AMGT…VTQA), 7938-7996 (AMSN…ITRA), 8064-8125 (AMDQ…ITNE), 8190-8251 (AMDQ…ITNE), 8316-8374 (AMEL…VNRA), 8442-8500 (AMGN…VEQA), 8568-8625 (AMHG…INQA), 8693-8751 (LMDA…VTSA), 8819-8877 (AMKA…IDQA), 8945-9003 (AMEA…VEQL), 9071-9129 (AMQA…VEQL), 9197-9255 (AMET…VDQA), 9323-9377 (SMDQ…VDQA), 9445-9504 (VMDQ…VIKL), and 9699-9755 (AMET…INGA). The segment covering 7066–7080 (DNATTKQNQNYTDSS) has biased composition (polar residues). The segment at 7066–7085 (DNATTKQNQNYTDSSPNKKD) is disordered. The span at 10492-10507 (DHSKPSSNSDGQSNSH) shows a compositional bias: polar residues. Residues 10492–10530 (DHSKPSSNSDGQSNSHLHVGYGTVNHPFNSSPIGHKKKL) are disordered. A helical membrane pass occupies residues 10552-10572 (IKNALGVVGISGLLASFWFFI). The interval 10649-10746 (RRKEDEEDVE…KKKKSKKNKK (98 aa)) is disordered. The segment covering 10664 to 10674 (TDEKVLQDNEH) has biased composition (basic and acidic residues). Residues 10719 to 10746 (KGKKSASKKPSKKVAAKKKKKKSKKNKK) show a composition bias toward basic residues.

It localises to the cell membrane. The polypeptide is Extracellular matrix-binding protein ebh (ebh) (Staphylococcus aureus (strain MRSA252)).